Here is a 192-residue protein sequence, read N- to C-terminus: Secreted and transmembrane protein 1A (192 aa).

An N-terminal signal peptide occupies residues M1–A27. The Extracellular portion of the chain corresponds to Q28–T165. 4 N-linked (GlcNAc...) asparagine glycosylation sites follow: N29, N55, N84, and N127. A helical transmembrane segment spans residues L166–Y186. Over Y187 to S192 the chain is Cytoplasmic.

It belongs to the SECTM family.

It is found in the cell membrane. It localises to the secreted. The chain is Secreted and transmembrane protein 1A from Mus musculus (Mouse).